Consider the following 147-residue polypeptide: MPLTADQVAALKASWPEVSAGDGGGQLGLELFTKYFHENPQMMFIFGYSGRTDALKHNAKLQNHGKVIIDQIGKAVAEMDNAKQMAGTLHALGVRHKGFGDIRADFFPALGMCLLDAMEEKVPGLNRTLWAAAYREISDALVAGLES.

One can recognise a Globin domain in the interval 2 to 146 (PLTADQVAAL…ISDALVAGLE (145 aa)). His-96 contacts heme b.

The protein belongs to the globin family. In terms of assembly, polymer.

In Glycera dibranchiata (Bloodworm), this protein is Globin, polymeric component P2.